We begin with the raw amino-acid sequence, 935 residues long: Intimin (935 aa).

Residues 1–41 form the signal peptide; sequence MITHGFYARTRHKHKLKKTFIMLSAGLGLFFYVNQNSFANG. Positions 40–153 are peptidoglycan-binding; the sequence is NGENYFKLSS…KMTKMSPDAT (114 aa). The sufficient for homodimerization stretch occupies residues 40-153; sequence NGENYFKLSS…KMTKMSPDAT (114 aa). The interval 40–212 is required for periplasmic localization; it reads NGENYFKLSS…LQAWLQHYGT (173 aa). One can recognise a LysM domain in the interval 63–112; it reads LFYTLKTGETVSSISKSQGISLSVIWSLNKHLYSSESEMLKAAPGQQIIL. The tract at residues 210–411 is inverse autotransporter; it reads YGTAEVNLQS…LYSMQFRYQF (202 aa). Positions 402–411 are signature sequence for beta-barrel assembly machinery (BAM), which recognizes the unfolded beta-barrel in the periplasm; that stretch reads LYSMQFRYQF. 2 Big-1 domains span residues 560-653 and 660-754; these read VTDF…VIFV and ITEI…VTFF. A BIG2 domain is found at 790-834; sequence GGNGTYSWHSENTNIATVDESGKVTLKGKGTAVINVTSGDKQTVS. A disulfide bridge links cysteine 859 with cysteine 933.

Belongs to the intimin/invasin family. Homodimer. Interacts with Tir.

It is found in the cell outer membrane. In terms of biological role, an inverse autotransporter. Adhesin, which mediates attachment to the human intestine epithelial cells. Necessary for the production of attaching and effacing lesions on infected human tissue culture cells. Anchored to the outer membrane by binding to peptidoglycan (PGN) via its periplasmic domain, thus helping in receptor interactions during host invasion. PGN-binding may also aid in resisting mechanical and chemical stress during transit of the bacterium through the gastrointestinal tract of the host. The sequence is that of Intimin (eae) from Escherichia coli O111:H-.